The chain runs to 495 residues: Thioredoxin reductase SEP1 (495 aa).

Residue 37–54 (DFVKPSPPGTTWGLGGTC) coordinates FAD. Cys-54 and Cys-59 form a disulfide bridge. His-468 acts as the Proton acceptor in catalysis. Positions 493–494 (CU) form a cross-link, cysteinyl-selenocysteine (Cys-Sec). Sec-494 is a non-standard amino acid (selenocysteine).

It belongs to the class-I pyridine nucleotide-disulfide oxidoreductase family. In terms of assembly, homodimer. FAD is required as a cofactor. In terms of processing, the N-terminus is blocked.

The enzyme catalyses [thioredoxin]-dithiol + NADP(+) = [thioredoxin]-disulfide + NADPH + H(+). Activity was very low in selenium-depleted cells, but increased 4-fold to the same level as in selenium-sufficient cells for 70 hours after the addition of 10 nm selenite. The protein is Thioredoxin reductase SEP1 (SEP1) of Emiliania huxleyi (Coccolithophore).